We begin with the raw amino-acid sequence, 66 residues long: Sodium channel neurotoxin MeuNaTxalpha-7 (66 aa).

The region spanning 2–64 (RDGYIADDKN…VPIKVSGKCN (63 aa)) is the LCN-type CS-alpha/beta domain. Cystine bridges form between cysteine 12–cysteine 63, cysteine 16–cysteine 36, cysteine 22–cysteine 46, and cysteine 26–cysteine 48. Asparagine 64 is subject to Asparagine amide.

It belongs to the long (4 C-C) scorpion toxin superfamily. Sodium channel inhibitor family. Alpha subfamily. As to expression, expressed by the venom gland.

It localises to the secreted. Functionally, alpha toxins bind voltage-independently at site-3 of sodium channels (Nav) and inhibit the inactivation of the activated channels, thereby blocking neuronal transmission. The sequence is that of Sodium channel neurotoxin MeuNaTxalpha-7 from Mesobuthus eupeus (Lesser Asian scorpion).